Reading from the N-terminus, the 185-residue chain is Elongation factor P (185 aa).

Belongs to the elongation factor P family.

It localises to the cytoplasm. It participates in protein biosynthesis; polypeptide chain elongation. Functionally, involved in peptide bond synthesis. Stimulates efficient translation and peptide-bond synthesis on native or reconstituted 70S ribosomes in vitro. Probably functions indirectly by altering the affinity of the ribosome for aminoacyl-tRNA, thus increasing their reactivity as acceptors for peptidyl transferase. The chain is Elongation factor P from Trichormus variabilis (strain ATCC 29413 / PCC 7937) (Anabaena variabilis).